Reading from the N-terminus, the 434-residue chain is Enolase (434 aa).

Glutamine 165 contacts (2R)-2-phosphoglycerate. Catalysis depends on glutamate 207, which acts as the Proton donor. Mg(2+) is bound by residues aspartate 244, glutamate 291, and aspartate 318. The (2R)-2-phosphoglycerate site is built by lysine 343, arginine 372, serine 373, and lysine 394. Residue lysine 343 is the Proton acceptor of the active site.

The protein belongs to the enolase family. Requires Mg(2+) as cofactor.

It is found in the cytoplasm. The protein resides in the secreted. Its subcellular location is the cell surface. The enzyme catalyses (2R)-2-phosphoglycerate = phosphoenolpyruvate + H2O. The protein operates within carbohydrate degradation; glycolysis; pyruvate from D-glyceraldehyde 3-phosphate: step 4/5. Its function is as follows. Catalyzes the reversible conversion of 2-phosphoglycerate (2-PG) into phosphoenolpyruvate (PEP). It is essential for the degradation of carbohydrates via glycolysis. This is Enolase from Staphylococcus haemolyticus (strain JCSC1435).